The following is a 916-amino-acid chain: Chitin synthase B (916 aa).

Disordered regions lie at residues 1-75 (MAYH…GYSL) and 118-141 (ARSE…GGNG). A compositionally biased stretch (basic and acidic residues) spans 14 to 26 (HTYDDGHQLRDLS). Residues 59 to 75 (RGLTASPVQRPTSGYSL) show a composition bias toward polar residues. The next 7 helical transmembrane spans lie at 544–561 (RWLN…MHFG), 588–608 (FLTW…MDLV), 629–649 (IINT…FILA), 664–684 (SFVA…YLVV), 716–736 (IIII…FMYL), 845–865 (LVTL…SEGL), and 884–904 (ALLW…TWFL).

The protein belongs to the chitin synthase family. Class III subfamily. Interacts with kibesin kinA. Post-translationally, activity requires trypsin activation, suggesting a zymogenic nature. In terms of processing, phosphorylated at yet unidentified residues in a N-terminal disordered region-dependent manner.

It is found in the cell membrane. The protein resides in the cell tip. The protein localises to the cell septum. The catalysed reaction is [(1-&gt;4)-N-acetyl-beta-D-glucosaminyl](n) + UDP-N-acetyl-alpha-D-glucosamine = [(1-&gt;4)-N-acetyl-beta-D-glucosaminyl](n+1) + UDP + H(+). Its activity is regulated as follows. Activity is stimulated by Mg(2+) and is inhibited by polyoxin D. Functionally, polymerizes chitin, a structural polymer of the cell wall and septum, by transferring the sugar moiety of UDP-GlcNAc to the non-reducing end of the growing chitin polymer. Does not substantially contribute to the rigidity of the cell wall but is necessary for normal hyphal growth and organization. In addition to its functions in the formation of normal cell walls of hyphae, is also involved in conidiophore and conidia development. The chain is Chitin synthase B from Emericella nidulans (strain FGSC A4 / ATCC 38163 / CBS 112.46 / NRRL 194 / M139) (Aspergillus nidulans).